Here is a 61-residue protein sequence, read N- to C-terminus: Probable spanin, outer lipoprotein subunit (61 aa).

The first 28 residues, 1-28 (MLTRLSKLSALMFLLGVSACKSPPPVQS), serve as a signal peptide directing secretion. The Periplasmic segment spans residues 29–61 (QRPEPAAWAMEKAQDLQQMLNSIITVSEVESTG).

This sequence belongs to the caudovirales o-spanin family. In terms of assembly, interacts (via C-terminus) with the spanin inner membrane subunit (via C-terminus). Part of the spanin complex which spans the entire periplasmic space. The spanin complex is composed of spanin inner membrane subunit and spanin outer membrane subunit.

The protein localises to the host cell outer membrane. Functionally, component of the spanin complex that disrupts the host outer membrane and participates in cell lysis during virus exit. The spanin complex conducts the final step in host lysis by disrupting the outer membrane after holin and endolysin action have permeabilized the inner membrane and degraded the host peptidoglycans. Host outer membrane disruption is possibly due to local fusion between the inner and outer membrane performed by the spanin complex. The polypeptide is Probable spanin, outer lipoprotein subunit (Rz1) (Salmonella typhimurium (Bacteriophage P22)).